We begin with the raw amino-acid sequence, 379 residues long: Alternative oxidase 1, mitochondrial (379 aa).

Residues 33–50 (TTTTSTKSRSSTSTAATT) are compositionally biased toward low complexity. Residues 33–76 (TTTTSTKSRSSTSTAATTVGNSNPKSPIDEDNLEKPGTIPTKHK) form a disordered region. Fe cation contacts are provided by Glu-180, Glu-219, and His-222. A helical transmembrane segment spans residues 234-256 (WFTRSIIYIGQGVFTNIFFLVYL). Residues Glu-270, Glu-271, Glu-326, and His-329 each contribute to the Fe cation site.

It belongs to the alternative oxidase family. Fe cation is required as a cofactor.

The protein localises to the mitochondrion inner membrane. In terms of biological role, catalyzes cyanide-resistant oxygen consumption. May increase respiration when the cytochrome respiratory pathway is restricted, or in response to low temperatures. The polypeptide is Alternative oxidase 1, mitochondrial (AOX1) (Candida albicans (Yeast)).